Reading from the N-terminus, the 104-residue chain is UPF0145 protein cbdbA1711 (104 aa).

This sequence belongs to the UPF0145 family.

The polypeptide is UPF0145 protein cbdbA1711 (Dehalococcoides mccartyi (strain CBDB1)).